Consider the following 499-residue polypeptide: Probable alpha-L-arabinofuranosidase B (499 aa).

The N-terminal stretch at 1 to 17 is a signal peptide; that stretch reads MFSRRNLLALGLAATVS. Residues 18–335 are catalytic; it reads AGPCDIYEAG…ENIVAAKYVV (318 aa). 3 disulfides stabilise this stretch: Cys-21–Cys-31, Cys-81–Cys-86, and Cys-176–Cys-177. N-linked (GlcNAc...) asparagine glycosylation occurs at Asn-83. N-linked (GlcNAc...) asparagine glycosylation occurs at Asn-202. Asp-219 is a substrate binding site. Glu-221 acts as the Nucleophile in catalysis. Substrate is bound by residues Asn-222, Asn-223, Gly-296, His-416, Asn-418, Phe-419, Asp-435, His-463, Glu-465, Leu-468, and Asp-488. Residues 336-499 form an ABD region; it reads GSLVSGPSFT…SFEIETAFAS (164 aa). A disulfide bridge links Cys-401 with Cys-439.

It belongs to the glycosyl hydrolase 54 family.

It is found in the secreted. It catalyses the reaction Hydrolysis of terminal non-reducing alpha-L-arabinofuranoside residues in alpha-L-arabinosides.. The protein operates within glycan metabolism; L-arabinan degradation. Its function is as follows. Alpha-L-arabinofuranosidase involved in the degradation of arabinoxylan, a major component of plant hemicellulose. Able to hydrolyze 1,5-, 1,3- and 1,2-alpha-linkages not only in L-arabinofuranosyl oligosaccharides, but also in polysaccharides containing terminal non-reducing L-arabinofuranoses in side chains, like L-arabinan, arabinogalactan and arabinoxylan. The protein is Probable alpha-L-arabinofuranosidase B (abfB) of Aspergillus awamori (Black koji mold).